A 208-amino-acid polypeptide reads, in one-letter code: Large ribosomal subunit protein uL3 (208 aa).

The segment at 117-147 is disordered; sequence FQGVIKRHGQSRGPMAHGSRYHRRPGSMGPV.

The protein belongs to the universal ribosomal protein uL3 family. As to quaternary structure, part of the 50S ribosomal subunit. Forms a cluster with proteins L14 and L19.

Functionally, one of the primary rRNA binding proteins, it binds directly near the 3'-end of the 23S rRNA, where it nucleates assembly of the 50S subunit. The polypeptide is Large ribosomal subunit protein uL3 (Streptococcus equi subsp. zooepidemicus (strain H70)).